Here is a 199-residue protein sequence, read N- to C-terminus: NADH-quinone oxidoreductase subunit I (199 aa).

4Fe-4S ferredoxin-type domains are found at residues Leu-45 to Ala-75 and Arg-91 to Glu-120. Cys-55, Cys-58, Cys-61, Cys-65, Cys-100, Cys-103, Cys-106, and Cys-110 together coordinate [4Fe-4S] cluster. The tract at residues Gly-164–Pro-199 is disordered. The span at Thr-182–Pro-199 shows a compositional bias: basic and acidic residues.

Belongs to the complex I 23 kDa subunit family. As to quaternary structure, NDH-1 is composed of 14 different subunits. Subunits NuoA, H, J, K, L, M, N constitute the membrane sector of the complex. The cofactor is [4Fe-4S] cluster.

The protein localises to the cell membrane. The enzyme catalyses a quinone + NADH + 5 H(+)(in) = a quinol + NAD(+) + 4 H(+)(out). Its function is as follows. NDH-1 shuttles electrons from NADH, via FMN and iron-sulfur (Fe-S) centers, to quinones in the respiratory chain. The immediate electron acceptor for the enzyme in this species is believed to be ubiquinone. Couples the redox reaction to proton translocation (for every two electrons transferred, four hydrogen ions are translocated across the cytoplasmic membrane), and thus conserves the redox energy in a proton gradient. The chain is NADH-quinone oxidoreductase subunit I from Acidothermus cellulolyticus (strain ATCC 43068 / DSM 8971 / 11B).